Reading from the N-terminus, the 197-residue chain is MSASRFIKCVTVGDGAVGKTCLLISYTSNTFPTDYVPTVFDNFSANVVVDGSTVNLGLWDTAGQEDYNRLRPLSYRGADVFILAFSLISKASYENIAKKWIPELRHYAPGVPIILVGTKLDLRDDKHFLADHPGAVPITTAQGEELRKLIGAPAYIECSSKTQQNVKAVFDAAIKVVLQPPKQKKKKREAQKSCSIL.

13–20 (GDGAVGKT) is a GTP binding site. The Effector region signature appears at 35-43 (YVPTVFDNF). GTP contacts are provided by residues 60–64 (DTAGQ) and 118–121 (TKLD). The residue at position 194 (Cys194) is a Cysteine methyl ester. Residue Cys194 is the site of S-geranylgeranyl cysteine attachment. Positions 195–197 (SIL) are cleaved as a propeptide — removed in mature form.

The protein belongs to the small GTPase superfamily. Rho family.

It is found in the cytoplasm. The protein localises to the membrane. In terms of biological role, inactive GDP-bound Rho GTPases reside in the cytosol, are found in a complex with Rho GDP-dissociation inhibitors (Rho GDIs), and are released from the GDI protein in order to translocate to membranes upon activation. This chain is Rac-like GTP-binding protein RAC1 (RAC1), found in Lotus japonicus (Lotus corniculatus var. japonicus).